The primary structure comprises 277 residues: Large ribosomal subunit protein uL2 (277 aa).

The tract at residues 225–277 (MNPVDHPHGGGEGKTSGGRNSVTPWGVPTKGKKTRKRGKHSDKYIKVSSVRKR) is disordered. Positions 254 to 264 (KGKKTRKRGKH) are enriched in basic residues.

Belongs to the universal ribosomal protein uL2 family. Part of the 50S ribosomal subunit. Forms a bridge to the 30S subunit in the 70S ribosome.

In terms of biological role, one of the primary rRNA binding proteins. Required for association of the 30S and 50S subunits to form the 70S ribosome, for tRNA binding and peptide bond formation. It has been suggested to have peptidyltransferase activity; this is somewhat controversial. Makes several contacts with the 16S rRNA in the 70S ribosome. The sequence is that of Large ribosomal subunit protein uL2 from Anaplasma marginale (strain Florida).